We begin with the raw amino-acid sequence, 224 residues long: MNHLDRLQRQISYEFKDITLLKQALTHRSAATKHNERLEFLGDAILNYTIADALYHQFPKCNEGELSRMRATLVREPTLAILARQFKLGEYMALGHGELKSGGFRRESILADCVEAIIGAISLDSSLVSATQITLHWYEKLLREIKPGENQKDPKTRLQEYLQGHRLALPTYDVKDIKGEAHCQTFTIECHVPNLDRTFIGVGSSRRKAEQAAAEQILTALEIK.

Residues 4–126 (LDRLQRQISY…IIGAISLDSS (123 aa)) enclose the RNase III domain. Position 39 (glutamate 39) interacts with Mg(2+). The active site involves aspartate 43. Residues aspartate 112 and glutamate 115 each coordinate Mg(2+). Glutamate 115 is an active-site residue. One can recognise a DRBM domain in the interval 153–223 (DPKTRLQEYL…AEQILTALEI (71 aa)).

The protein belongs to the ribonuclease III family. In terms of assembly, homodimer. Mg(2+) serves as cofactor.

The protein resides in the cytoplasm. It catalyses the reaction Endonucleolytic cleavage to 5'-phosphomonoester.. Digests double-stranded RNA. Involved in the processing of primary rRNA transcript to yield the immediate precursors to the large and small rRNAs (23S and 16S). Processes some mRNAs, and tRNAs when they are encoded in the rRNA operon. Processes pre-crRNA and tracrRNA of type II CRISPR loci if present in the organism. The protein is Ribonuclease 3 of Mannheimia succiniciproducens (strain KCTC 0769BP / MBEL55E).